The primary structure comprises 462 residues: GTPase HflX (462 aa).

Residues 255–452 enclose the Hflx-type G domain; the sequence is PAVGIVGYTN…LLEEKIYNLP (198 aa). GTP contacts are provided by residues 261–268, 286–290, 308–311, 374–377, and 430–432; these read GYTNAGKS, FATLD, DTVG, NKID, and SAY. Residues S268 and T288 each contribute to the Mg(2+) site.

This sequence belongs to the TRAFAC class OBG-HflX-like GTPase superfamily. HflX GTPase family. In terms of assembly, monomer. Associates with the 50S ribosomal subunit. The cofactor is Mg(2+).

The protein resides in the cytoplasm. Functionally, GTPase that associates with the 50S ribosomal subunit and may have a role during protein synthesis or ribosome biogenesis. In Leptospira borgpetersenii serovar Hardjo-bovis (strain JB197), this protein is GTPase HflX.